Reading from the N-terminus, the 532-residue chain is Pre-piRNA 3'-exonuclease trimmer (532 aa).

Mg(2+)-binding residues include Asp-28, Glu-30, Asp-270, and Asp-365. The chain crosses the membrane as a helical span at residues 503–523 (AGRFAIWSGSIVTGGLALYLI).

Belongs to the CAF1 family. Interacts with Papi/Tdrkh; interaction takes place on the mitochondrial surface and recruits PNLDC1/trimmer to PIWI-bound pre-piRNAs. Requires Mg(2+) as cofactor.

It is found in the mitochondrion outer membrane. Its function is as follows. 3'-5' exonuclease that specifically cleaves precursor piRNAs (pre-piRNAs) at their 3' ends. Trims pre-piRNAs to their mature size, a process required for piRNAs maturation and stabilization, and subsequent pre-piRNAs 2'-O-methylation. The piRNA metabolic process mediates the repression of transposable elements during meiosis by forming complexes composed of piRNAs and Piwi proteins and govern the methylation and subsequent repression of transposons. The chain is Pre-piRNA 3'-exonuclease trimmer from Bombyx mori (Silk moth).